Here is a 1032-residue protein sequence, read N- to C-terminus: ATPase MORC2 (1032 aa).

An N-acetylalanine modification is found at Ala-2. ATP-binding positions include Asn-39, 87-89 (SAK), and 99-105 (QYGNGLK). Residue Asn-39 coordinates Mg(2+). A coiled-coil region spans residues 282-362 (SRFKTRAEQE…KEAKQRALKE (81 aa)). Position 427 (Lys-427) interacts with ATP. The CW-type zinc finger occupies 490 to 544 (AMEIPTTIQCDLCLKWRTLPFQLSSVEKDYPDTWVCSMNPDPEQDRCEASEQKQK). Positions 499, 502, 525, and 536 each coordinate Zn(2+). 2 disordered regions span residues 530 to 563 (DPEQ…KQKQ) and 577 to 793 (ALQK…RAQK). Basic and acidic residues-rich tracts occupy residues 532 to 543 (EQDRCEASEQKQ) and 550 to 563 (FRKD…KQKQ). The stretch at 547-584 (LGTFRKDMKTQEEKQKQLTEKIRQQQEKLEALQKTTPI) forms a coiled coil. Thr-582 is modified (phosphothreonine). Residues Ser-602 and Ser-615 each carry the phosphoserine modification. The span at 627–638 (SRPPSLPTPRPA) shows a compositional bias: pro residues. Residue Lys-652 forms a Glycyl lysine isopeptide (Lys-Gly) (interchain with G-Cter in SUMO2) linkage. The span at 690 to 704 (PLVQQLSPSLLPNSK) shows a compositional bias: low complexity. Phosphoserine is present on Ser-696. Lys-704 participates in a covalent cross-link: Glycyl lysine isopeptide (Lys-Gly) (interchain with G-Cter in SUMO2). Ser-705 is modified (phosphoserine). Low complexity predominate over residues 711-720 (SPKVIKTPVV). A Glycyl lysine isopeptide (Lys-Gly) (interchain with G-Cter in SUMO2) cross-link involves residue Lys-716. Phosphoserine is present on residues Ser-725 and Ser-730. Residue Thr-733 is modified to Phosphothreonine. Ser-739 carries the phosphoserine; by PAK1 modification. Residues 741–761 (AVSDEEEVEEEAERRKERCKR) are a coiled coil. Residue Ser-743 is modified to Phosphoserine. The span at 765-774 (VVKEEKKDSN) shows a compositional bias: basic and acidic residues. Lys-767 participates in a covalent cross-link: Glycyl lysine isopeptide (Lys-Gly) (interchain with G-Cter in SUMO2). 2 positions are modified to phosphoserine: Ser-777 and Ser-779. Lys-819 is covalently cross-linked (Glycyl lysine isopeptide (Lys-Gly) (interchain with G-Cter in SUMO2)). Residues 850–870 (RLMKPPSPEHQSLDTQQEGGE) form a disordered region. A Glycyl lysine isopeptide (Lys-Gly) (interchain with G-Cter in SUMO2) cross-link involves residue Lys-932. The stretch at 966–1016 (QSRADSRAKASEESLRTSERKLRETEEKLQKLRTNIVALLQKVQEDIDINT) forms a coiled coil.

Homodimerizes upon ATP-binding and dissociate upon ATP hydrolysis; homodimerization is required for gene silencing. Interacts with HDAC4. Interacts with ACLY. Interacts with TASOR and MPHOSPH8; the interactions associate MORC2 with the HUSH complex which recruits MORC2 to heterochromatic loci. Phosphorylated by PAK1 at Ser-739 upon DNA damage. Phosphorylation is required for ATPase activity and recruitment to damaged chromatin. In terms of tissue distribution, highly expressed in smooth muscle, pancreas and testis.

The protein localises to the nucleus. It localises to the cytoplasm. Its subcellular location is the cytosol. It is found in the chromosome. The protein resides in the nucleus matrix. It carries out the reaction ATP + H2O = ADP + phosphate + H(+). With respect to regulation, ATPase activity is dependent of phosphorylation by PAK1 and presence of DNA. In terms of biological role, essential for epigenetic silencing by the HUSH (human silencing hub) complex. Recruited by HUSH to target site in heterochromatin, the ATPase activity and homodimerization are critical for HUSH-mediated silencing. Represses germ cell-related genes and L1 retrotransposons in collaboration with SETDB1 and the HUSH complex, the silencing is dependent of repressive epigenetic modifications, such as H3K9me3 mark. Silencing events often occur within introns of transcriptionally active genes, and lead to the down-regulation of host gene expression. During DNA damage response, regulates chromatin remodeling through ATP hydrolysis. Upon DNA damage, is phosphorylated by PAK1, both colocalize to chromatin and induce H2AX expression. ATPase activity is required and dependent of phosphorylation by PAK1 and presence of DNA. Recruits histone deacetylases, such as HDAC4, to promoter regions, causing local histone H3 deacetylation and transcriptional repression of genes such as CA9. Exhibits a cytosolic function in lipogenesis, adipogenic differentiation, and lipid homeostasis by increasing the activity of ACLY, possibly preventing its dephosphorylation. In Homo sapiens (Human), this protein is ATPase MORC2.